The chain runs to 149 residues: Small ribosomal subunit protein bS18c (149 aa).

Residues 1-23 form a disordered region; that stretch reads MDKITGPFRKSKKSFRKPLPPIQ.

It belongs to the bacterial ribosomal protein bS18 family. In terms of assembly, part of the 30S ribosomal subunit.

The protein localises to the plastid. This Cuscuta obtusiflora (Peruvian dodder) protein is Small ribosomal subunit protein bS18c.